Consider the following 247-residue polypeptide: Aliphatic sulfonates import ATP-binding protein SsuB 1 (247 aa).

One can recognise an ABC transporter domain in the interval 7–222; the sequence is LSLSGVHKSF…KRSSYEFVET (216 aa). An ATP-binding site is contributed by 39–46; the sequence is GKSGCGKS.

It belongs to the ABC transporter superfamily. Aliphatic sulfonates importer (TC 3.A.1.17.2) family. The complex is composed of two ATP-binding proteins (SsuB), two transmembrane proteins (SsuC) and a solute-binding protein (SsuA).

Its subcellular location is the cell membrane. The enzyme catalyses ATP + H2O + aliphatic sulfonate-[sulfonate-binding protein]Side 1 = ADP + phosphate + aliphatic sulfonateSide 2 + [sulfonate-binding protein]Side 1.. Functionally, part of the ABC transporter complex SsuABC involved in aliphatic sulfonates import. Responsible for energy coupling to the transport system. The polypeptide is Aliphatic sulfonates import ATP-binding protein SsuB 1 (Shouchella clausii (strain KSM-K16) (Alkalihalobacillus clausii)).